Consider the following 208-residue polypeptide: Octanoyltransferase (208 aa).

The BPL/LPL catalytic domain occupies 30-208; it reads GTASEAVFIL…ILKQEFYKIF (179 aa). Substrate is bound by residues 69-76, 142-144, and 155-157; these read RGGKFTYH, SIG, and GVA. The Acyl-thioester intermediate role is filled by cysteine 173.

Belongs to the LipB family.

It localises to the cytoplasm. The catalysed reaction is octanoyl-[ACP] + L-lysyl-[protein] = N(6)-octanoyl-L-lysyl-[protein] + holo-[ACP] + H(+). It functions in the pathway protein modification; protein lipoylation via endogenous pathway; protein N(6)-(lipoyl)lysine from octanoyl-[acyl-carrier-protein]: step 1/2. Functionally, catalyzes the transfer of endogenously produced octanoic acid from octanoyl-acyl-carrier-protein onto the lipoyl domains of lipoate-dependent enzymes. Lipoyl-ACP can also act as a substrate although octanoyl-ACP is likely to be the physiological substrate. The polypeptide is Octanoyltransferase (Orientia tsutsugamushi (strain Boryong) (Rickettsia tsutsugamushi)).